We begin with the raw amino-acid sequence, 227 residues long: Large ribosomal subunit protein uL3 (227 aa).

Belongs to the universal ribosomal protein uL3 family. In terms of assembly, part of the 50S ribosomal subunit. Forms a cluster with proteins L14 and L19.

Its function is as follows. One of the primary rRNA binding proteins, it binds directly near the 3'-end of the 23S rRNA, where it nucleates assembly of the 50S subunit. This Leuconostoc citreum (strain KM20) protein is Large ribosomal subunit protein uL3.